Here is a 453-residue protein sequence, read N- to C-terminus: Crh-like protein CRH11 (453 aa).

An N-terminal signal peptide occupies residues 1-21 (MKFTTLATIASTLLFAANANA). Cys24 and Cys32 are joined by a disulfide. The GH16 domain maps to 28 to 227 (KSSDCSPVPA…WAGGITDYSQ (200 aa)). Glu119 serves as the catalytic Nucleophile. Glu123 acts as the Proton donor in catalysis. Residues Glu123, Trp204, and Thr215 each contribute to the chitin site. 3 disordered regions span residues 281–343 (LESG…SEKS), 362–397 (KTTV…PASA), and 410–430 (GDAA…TENN). 3 stretches are compositionally biased toward low complexity: residues 286–343 (SVDS…SEKS), 363–397 (TTVT…PASA), and 412–425 (AAPS…PSVS). The N-linked (GlcNAc...) asparagine glycan is linked to Asn290. Asn430 carries the GPI-anchor amidated asparagine lipid modification. Residues 431-453 (GAVSVAKTTSLFGFVALIGFLFV) constitute a propeptide, removed in mature form.

The protein belongs to the glycosyl hydrolase 16 family. CRH1 subfamily. In terms of processing, the GPI-anchor is attached to the protein in the endoplasmic reticulum and serves to target the protein to the cell surface. There, the glucosamine-inositol phospholipid moiety is cleaved off and the GPI-modified mannoprotein is covalently attached via its lipidless GPI glycan remnant to the 1,6-beta-glucan of the outer cell wall layer.

It is found in the secreted. Its subcellular location is the cell wall. The protein resides in the membrane. It carries out the reaction Random endo-hydrolysis of N-acetyl-beta-D-glucosaminide (1-&gt;4)-beta-linkages in chitin and chitodextrins.. In terms of biological role, dual chitinase/transglycosylase that plays a role in cell wall architecture. Chitinase and transglycosylase activities are coupled. Required for the polysaccharide cross-linking at the septa and the cell wall. More specifically, transfers chitin to 1,6-beta-glucan in the cell wall. Plays an important role in fungal pathogenesis via its functions in cell wall assembly and regeneration, filamentation, and adherence to host cells. The protein is Crh-like protein CRH11 (CRH11) of Candida albicans (strain SC5314 / ATCC MYA-2876) (Yeast).